An 865-amino-acid polypeptide reads, in one-letter code: Probable beta-glucosidase J (865 aa).

Asp233 is a catalytic residue. N-linked (GlcNAc...) asparagine glycans are attached at residues Asn330, Asn447, Asn503, and Asn764. One can recognise a PA14 domain in the interval 411–579 (TGQPGYTFRV…DTDTAIQQAV (169 aa)).

This sequence belongs to the glycosyl hydrolase 3 family.

The protein localises to the secreted. It carries out the reaction Hydrolysis of terminal, non-reducing beta-D-glucosyl residues with release of beta-D-glucose.. It participates in glycan metabolism; cellulose degradation. Its function is as follows. Beta-glucosidases are one of a number of cellulolytic enzymes involved in the degradation of cellulosic biomass. Catalyzes the last step releasing glucose from the inhibitory cellobiose. This chain is Probable beta-glucosidase J (bglJ), found in Aspergillus fumigatus (strain ATCC MYA-4609 / CBS 101355 / FGSC A1100 / Af293) (Neosartorya fumigata).